Consider the following 353-residue polypeptide: Protein U67 (353 aa).

Belongs to the herpesviridae UL95 family.

This Human herpesvirus 6A (strain Uganda-1102) (HHV-6 variant A) protein is Protein U67 (U67).